Reading from the N-terminus, the 828-residue chain is MRVPYSWLREVVAAGAPDWDVAPAELEQTLIRIGHEVEEVIELGPVDGPLTVGRVTDIEELTGFKKPIRFCHVDVGDDVDREIVCGATNFVAGDLVVVALPGTTLPGGFAIAARKTYGRNSDGMICSAAELGLGADHSGILVLPPGTAEPGADGAAVLGLDDVIFHLAITPDRGYCMSLRGLAREIACAYDLEFVDPADVKPLPVDGQAWPLTVQPDTGVRRFALRPVTGIDPAAVSPWWLQRRLLLSGIRATSPAVDVTNYVMLELGHPMHAHDRNRISGGLGVRFARPGETVVTLDDIERKLEPVDVLIVDDAATAAIGGVMGAASTEVRADSTDVLLEAAVWDPAAVSRTQRRLHLPSEAARRYERGVDPAISVAALDRCAALLAGIAGGKVSEALTDWRGEPACDGWSPPAIQMPADLPDRLAGVIYPPGTAAKRLAQIGAAVTADGGTLTVVPPSWRPDLLQPADLVEEVLRLEGLEVIGSVLPSAPAGRGLSAAQRRRRAIGRSLAQSGYVEILPTPFLPAGVFDVWGLPDDDPRRGTTQVLNPLEADRPHLATTLLPALLEALVRNVSRGLVDVSLYALAQVVQPTAETRAVQFIPVDRRPTDAEIAVLDASLPRQPQHVAAVLTGLREQRGPWGPGRRAEAADAFEAVRVIARAAGVDVRLRAAQQLPWHPGRCAEVLVGDTPVGYAGQLHPAVVERAGLPRGTCALELDLDAIPLVATLPAPRISPFPAVFQDVSLVVAADVPAQAVADAVCEGAGDLLEDLQLFDVFTGPQLGEHRKSLTFALRFRAPDRTLTEDDATAARDAAVRRAAEAVGAELRT.

The region spanning 44–155 is the tRNA-binding domain; that stretch reads GPVDGPLTVG…GTAEPGADGA (112 aa). In terms of domain architecture, B5 spans 411-486; it reads WSPPAIQMPA…RLEGLEVIGS (76 aa). Residues Asp-464, Asp-470, Glu-473, and Glu-474 each coordinate Mg(2+). Residues 734-827 form the FDX-ACB domain; that stretch reads SPFPAVFQDV…AAEAVGAELR (94 aa).

The protein belongs to the phenylalanyl-tRNA synthetase beta subunit family. Type 1 subfamily. As to quaternary structure, tetramer of two alpha and two beta subunits. Requires Mg(2+) as cofactor.

The protein resides in the cytoplasm. It carries out the reaction tRNA(Phe) + L-phenylalanine + ATP = L-phenylalanyl-tRNA(Phe) + AMP + diphosphate + H(+). The polypeptide is Phenylalanine--tRNA ligase beta subunit (Mycolicibacterium paratuberculosis (strain ATCC BAA-968 / K-10) (Mycobacterium paratuberculosis)).